A 144-amino-acid polypeptide reads, in one-letter code: NADH dehydrogenase [ubiquinone] 1 alpha subcomplex subunit 13 (144 aa).

Alanine 2 is modified (N-acetylalanine). Residues 30-51 form a helical membrane-spanning segment; that stretch reads LSGYSMFAVGIGALLFGYWSMM.

As to quaternary structure, complex I is composed of 45 different subunits. Interacts with CARD15, but not with CARD4. Interacts with STAT3, but not with STAT1, STAT2 and STAT5A. Interacts with OLFM4.

The protein localises to the mitochondrion inner membrane. It localises to the nucleus. Functionally, accessory subunit of the mitochondrial membrane respiratory chain NADH dehydrogenase (Complex I), that is believed not to be involved in catalysis. Complex I functions in the transfer of electrons from NADH to the respiratory chain. The immediate electron acceptor for the enzyme is believed to be ubiquinone. Involved in the interferon/all-trans-retinoic acid (IFN/RA) induced cell death. This apoptotic activity is inhibited by interaction with viral IRF1. Prevents the transactivation of STAT3 target genes. May play a role in CARD15-mediated innate mucosal responses and serve to regulate intestinal epithelial cell responses to microbes. In Bos taurus (Bovine), this protein is NADH dehydrogenase [ubiquinone] 1 alpha subcomplex subunit 13 (NDUFA13).